A 162-amino-acid polypeptide reads, in one-letter code: MSDKIGLFTGSFDPMTNGHLDIIERASRLFDKLYVGIFFNPHKQGFLPIENRKRGLEKAVKHLGNVKVVSSHDELVVDVAKRLGATCLVRGLRNASDLQYEASFDYYNHQLSPDIETIYLHSRPEHLYISSSGVRELLKFGQDIACYVPESILEEIRNEKKD.

S11 serves as a coordination point for substrate. Residues 11-12 (SF) and H19 contribute to the ATP site. Positions 43, 76, and 90 each coordinate substrate. ATP-binding positions include 91 to 93 (GLR), E101, and 126 to 132 (HLYISSS).

This sequence belongs to the bacterial CoaD family. In terms of assembly, homohexamer. The cofactor is Mg(2+).

It localises to the cytoplasm. The catalysed reaction is (R)-4'-phosphopantetheine + ATP + H(+) = 3'-dephospho-CoA + diphosphate. It functions in the pathway cofactor biosynthesis; coenzyme A biosynthesis; CoA from (R)-pantothenate: step 4/5. Reversibly transfers an adenylyl group from ATP to 4'-phosphopantetheine, yielding dephospho-CoA (dPCoA) and pyrophosphate. In Streptococcus pneumoniae (strain CGSP14), this protein is Phosphopantetheine adenylyltransferase.